Consider the following 156-residue polypeptide: Arginine repressor (156 aa).

It belongs to the ArgR family.

The protein resides in the cytoplasm. It participates in amino-acid biosynthesis; L-arginine biosynthesis [regulation]. Functionally, regulates arginine biosynthesis genes. In Shewanella pealeana (strain ATCC 700345 / ANG-SQ1), this protein is Arginine repressor.